The chain runs to 382 residues: Alkanesulfonate monooxygenase (382 aa).

The protein belongs to the SsuD family.

It catalyses the reaction an alkanesulfonate + FMNH2 + O2 = an aldehyde + FMN + sulfite + H2O + 2 H(+). Catalyzes the desulfonation of aliphatic sulfonates. This Ectopseudomonas mendocina (strain ymp) (Pseudomonas mendocina) protein is Alkanesulfonate monooxygenase.